Consider the following 47-residue polypeptide: Large ribosomal subunit protein eL40 (47 aa).

This sequence belongs to the eukaryotic ribosomal protein eL40 family.

In Methanococcus aeolicus (strain ATCC BAA-1280 / DSM 17508 / OCM 812 / Nankai-3), this protein is Large ribosomal subunit protein eL40.